The following is a 462-amino-acid chain: Glycine--tRNA ligase (462 aa).

Substrate-binding residues include arginine 99 and glutamate 174. Residues 206–208 (RNE), 216–221 (FRTREF), 290–291 (EL), and 334–337 (GADR) contribute to the ATP site. 221-225 (FEQME) is a substrate binding site. 330-334 (EPSLG) contacts substrate.

It belongs to the class-II aminoacyl-tRNA synthetase family. Homodimer.

It is found in the cytoplasm. The enzyme catalyses tRNA(Gly) + glycine + ATP = glycyl-tRNA(Gly) + AMP + diphosphate. Its function is as follows. Catalyzes the attachment of glycine to tRNA(Gly). In Macrococcus caseolyticus (strain JCSC5402) (Macrococcoides caseolyticum), this protein is Glycine--tRNA ligase.